Here is a 424-residue protein sequence, read N- to C-terminus: Histidine--tRNA ligase (424 aa).

It belongs to the class-II aminoacyl-tRNA synthetase family. Homodimer.

Its subcellular location is the cytoplasm. It carries out the reaction tRNA(His) + L-histidine + ATP = L-histidyl-tRNA(His) + AMP + diphosphate + H(+). This is Histidine--tRNA ligase from Thioalkalivibrio sulfidiphilus (strain HL-EbGR7).